Consider the following 389-residue polypeptide: Chromobox protein homolog 8 (389 aa).

In terms of domain architecture, Chromo spans 11-69; sequence FAAEALLKRRIRKGRMEYLVKWKGWSQKYSTWEPEENILDARLLAAFEEREREMELYGP. A phosphoserine mark is found at Ser-110 and Ser-130. The disordered stretch occupies residues 124–241; that stretch reads LRNMGLSPPA…DDTPSGAGKF (118 aa). Positions 145–189 are enriched in basic and acidic residues; it reads EAPRDRDRDRDRDRERDRERERERERERERERERERGTSRVDDKP. Phosphoserine occurs at positions 191, 256, 265, 311, 332, and 352. The interval 298–327 is disordered; the sequence is GALDPNGTRVRHGSGPPSSGGGLYRDMGAQ.

In terms of assembly, component of a PRC1-like complex. Interacts with RING1 RNF2, PCGF1, PCGF2, PCGF3, BMI1, PCGF5 and PCGF6. Interacts with MLLT3 and histone H3. Interacts with PHC2.

Its subcellular location is the nucleus. Component of a Polycomb group (PcG) multiprotein PRC1-like complex, a complex class required to maintain the transcriptionally repressive state of many genes, including Hox genes, throughout development. PcG PRC1 complex acts via chromatin remodeling and modification of histones; it mediates monoubiquitination of histone H2A 'Lys-119', rendering chromatin heritably changed in its expressibility. The sequence is that of Chromobox protein homolog 8 (CBX8) from Homo sapiens (Human).